The primary structure comprises 85 residues: Large ribosomal subunit protein bL31B (85 aa).

The protein belongs to the bacterial ribosomal protein bL31 family. Type B subfamily. As to quaternary structure, part of the 50S ribosomal subunit.

This chain is Large ribosomal subunit protein bL31B, found in Staphylococcus saprophyticus subsp. saprophyticus (strain ATCC 15305 / DSM 20229 / NCIMB 8711 / NCTC 7292 / S-41).